A 282-amino-acid chain; its full sequence is F-box/SPRY domain-containing protein 1 (282 aa).

The disordered stretch occupies residues 1–32 (MAAAAINAAAPPPPVAPTAPPPPPPPPLSQAS). Over residues 10-28 (APPPPVAPTAPPPPPPPPL) the composition is skewed to pro residues. Residues 29–78 (SQASGRLPSRVLELVFSYLDLPDLRSCGLVCKHWYRCLHGDENSEVWRSL) enclose the F-box domain. One can recognise a B30.2/SPRY domain in the interval 88–280 (LRTDILCNLP…VTLVYLGKPL (193 aa)).

Belongs to the FBXO45/Fsn family. Probable component of a E3 ubiquitin ligase complex.

It participates in protein modification; protein ubiquitination. This chain is F-box/SPRY domain-containing protein 1 (fbxo45), found in Xenopus tropicalis (Western clawed frog).